Reading from the N-terminus, the 443-residue chain is Nuclear distribution protein nudF (443 aa).

The LisH domain maps to 9-41 (QAEELHKSIIAYLSSINASRSCEVLREELQVDS). Positions 60–87 (TGIARLQKKILDLESKLAGLQTELDTIS) form a coiled coil. WD repeat units follow at residues 111 to 152 (SHRD…RTLK), 154 to 194 (HMRP…ANVR), 198 to 238 (GHDH…CVKV), 241 to 280 (SQGS…SVAS), 283 to 343 (GHEN…IKTL), 345 to 384 (GHDN…RLVK), 388 to 427 (AHGH…PGFQ), and 429 to 443 (VIAT…RIFT).

Belongs to the WD repeat LIS1/nudF family. As to quaternary structure, self-associates. Interacts with nudE and dynein.

It is found in the cytoplasm. The protein resides in the cytoskeleton. Its subcellular location is the spindle pole. Functionally, positively regulates the activity of the minus-end directed microtubule motor protein dynein. May enhance dynein-mediated microtubule sliding by targeting dynein to the microtubule plus end. Required for nuclear migration during vegetative growth as well as development. Required for retrograde early endosome (EE) transport from the hyphal tip. Required for localization of dynein to the mitotic spindle poles. Recruits additional proteins to the dynein complex at SPBs. This Aspergillus niger (strain ATCC MYA-4892 / CBS 513.88 / FGSC A1513) protein is Nuclear distribution protein nudF.